We begin with the raw amino-acid sequence, 220 residues long: Deoxyribose-phosphate aldolase (220 aa).

Catalysis depends on Asp-89, which acts as the Proton donor/acceptor. Catalysis depends on Lys-151, which acts as the Schiff-base intermediate with acetaldehyde. Lys-180 (proton donor/acceptor) is an active-site residue.

It belongs to the DeoC/FbaB aldolase family. DeoC type 1 subfamily.

The protein resides in the cytoplasm. It carries out the reaction 2-deoxy-D-ribose 5-phosphate = D-glyceraldehyde 3-phosphate + acetaldehyde. It participates in carbohydrate degradation; 2-deoxy-D-ribose 1-phosphate degradation; D-glyceraldehyde 3-phosphate and acetaldehyde from 2-deoxy-alpha-D-ribose 1-phosphate: step 2/2. Functionally, catalyzes a reversible aldol reaction between acetaldehyde and D-glyceraldehyde 3-phosphate to generate 2-deoxy-D-ribose 5-phosphate. The chain is Deoxyribose-phosphate aldolase from Macrococcus caseolyticus (strain JCSC5402) (Macrococcoides caseolyticum).